The following is a 280-amino-acid chain: Bis(5'-nucleosyl)-tetraphosphatase, symmetrical (280 aa).

This sequence belongs to the Ap4A hydrolase family.

It catalyses the reaction P(1),P(4)-bis(5'-adenosyl) tetraphosphate + H2O = 2 ADP + 2 H(+). Functionally, hydrolyzes diadenosine 5',5'''-P1,P4-tetraphosphate to yield ADP. This is Bis(5'-nucleosyl)-tetraphosphatase, symmetrical from Shigella boydii serotype 18 (strain CDC 3083-94 / BS512).